Consider the following 646-residue polypeptide: NADP-dependent malic enzyme 4, chloroplastic (646 aa).

A chloroplast-targeting transit peptide spans 1–74 (MISLTPSLFL…LETSAADIVP (74 aa)). Catalysis depends on Y194, which acts as the Proton donor. R247 contacts NADP(+). K265 (proton acceptor) is an active-site residue. A divalent metal cation-binding residues include E337, D338, and D361. Residues D361, 390 to 406 (LFLG…ELIA), and N502 each bind NADP(+).

The protein belongs to the malic enzymes family. Homodimer and homotetramer. Mg(2+) serves as cofactor. Mn(2+) is required as a cofactor. As to expression, expressed in leaves, stems, flowers and roots, mainly in vascular system. In roots, present in the stele, including the vascular tissue and the pericycle, mainly at emerging lateral roots and at root tips.

The protein resides in the plastid. It is found in the chloroplast. The catalysed reaction is (S)-malate + NADP(+) = pyruvate + CO2 + NADPH. The enzyme catalyses oxaloacetate + H(+) = pyruvate + CO2. The protein operates within photosynthesis; C3 acid pathway. Its function is as follows. The chloroplastic ME isoform decarboxylates malate shuttled from neighboring mesophyll cells. The CO(2) released is then refixed by ribulose-bisphosphate carboxylase. This pathway eliminates the photorespiratory loss of CO(2) that occurs in most plants. This Arabidopsis thaliana (Mouse-ear cress) protein is NADP-dependent malic enzyme 4, chloroplastic (NADP-ME4).